The primary structure comprises 176 residues: 3-hydroxyanthranilate 3,4-dioxygenase (176 aa).

Arg-44 serves as a coordination point for O2. Fe cation contacts are provided by His-48, Glu-54, and His-92. Glu-54 serves as a coordination point for substrate. Residues Arg-96 and Glu-106 each contribute to the substrate site. Residues Cys-121, Cys-124, Cys-158, and Cys-161 each contribute to the Fe cation site.

Belongs to the 3-HAO family. In terms of assembly, homodimer. The cofactor is Fe(2+).

The catalysed reaction is 3-hydroxyanthranilate + O2 = (2Z,4Z)-2-amino-3-carboxymuconate 6-semialdehyde. It participates in cofactor biosynthesis; NAD(+) biosynthesis; quinolinate from L-kynurenine: step 3/3. In terms of biological role, catalyzes the oxidative ring opening of 3-hydroxyanthranilate to 2-amino-3-carboxymuconate semialdehyde, which spontaneously cyclizes to quinolinate. The polypeptide is 3-hydroxyanthranilate 3,4-dioxygenase (Xanthomonas campestris pv. campestris (strain 8004)).